We begin with the raw amino-acid sequence, 77 residues long: Putative antitoxin VapB3 (77 aa).

Belongs to the UPF0330 family.

Functionally, possibly the antitoxin component of a type II toxin-antitoxin (TA) system. Its cognate toxin is VapC3 (Potential). The protein is Putative antitoxin VapB3 (vapB3) of Methanocaldococcus jannaschii (strain ATCC 43067 / DSM 2661 / JAL-1 / JCM 10045 / NBRC 100440) (Methanococcus jannaschii).